Consider the following 155-residue polypeptide: Large ribosomal subunit protein uL22 (155 aa).

Positions 109–155 are disordered; the sequence is HITVIVESRPPKKAGKQGASASAARARRAQASKAATKKATDSKEGSE. Basic and acidic residues predominate over residues 146–155; that stretch reads KATDSKEGSE.

Belongs to the universal ribosomal protein uL22 family. In terms of assembly, part of the 50S ribosomal subunit.

Functionally, this protein binds specifically to 23S rRNA; its binding is stimulated by other ribosomal proteins, e.g. L4, L17, and L20. It is important during the early stages of 50S assembly. It makes multiple contacts with different domains of the 23S rRNA in the assembled 50S subunit and ribosome. The globular domain of the protein is located near the polypeptide exit tunnel on the outside of the subunit, while an extended beta-hairpin is found that lines the wall of the exit tunnel in the center of the 70S ribosome. This Mycolicibacterium vanbaalenii (strain DSM 7251 / JCM 13017 / BCRC 16820 / KCTC 9966 / NRRL B-24157 / PYR-1) (Mycobacterium vanbaalenii) protein is Large ribosomal subunit protein uL22.